Reading from the N-terminus, the 366-residue chain is Beta-1,3-glucan-binding protein (366 aa).

The N-terminal stretch at 1-17 is a signal peptide; sequence MKGFVASVVLLACGALA. The region spanning 18–364 is the GH16 domain; that stretch reads ADIVEPEDCT…YVRVWKMEST (347 aa). The N-linked (GlcNAc...) asparagine glycan is linked to N66.

It belongs to the glycosyl hydrolase 16 family. As to expression, constitutively expressed in hemocytes.

The protein resides in the secreted. In terms of biological role, binds to beta-1,3-glucan. May play a role in recognition of microorganisms and in activation of the prophenoloxidase cascade. This Penaeus monodon (Giant tiger prawn) protein is Beta-1,3-glucan-binding protein.